The chain runs to 272 residues: Large ribosomal subunit protein uL2 (272 aa).

The segment at 222–272 is disordered; the sequence is GTAMNPVDHPHGGGEGRNFGKHPVSPWGKKTKGKKTRNNRLTDKFIVHRRS. The segment covering 250–259 has biased composition (basic residues); sequence KKTKGKKTRN. Residues 261-272 are compositionally biased toward basic and acidic residues; the sequence is RLTDKFIVHRRS.

Belongs to the universal ribosomal protein uL2 family. As to quaternary structure, part of the 50S ribosomal subunit. Forms a bridge to the 30S subunit in the 70S ribosome.

Its function is as follows. One of the primary rRNA binding proteins. Required for association of the 30S and 50S subunits to form the 70S ribosome, for tRNA binding and peptide bond formation. It has been suggested to have peptidyltransferase activity; this is somewhat controversial. Makes several contacts with the 16S rRNA in the 70S ribosome. The protein is Large ribosomal subunit protein uL2 of Baumannia cicadellinicola subsp. Homalodisca coagulata.